A 347-amino-acid polypeptide reads, in one-letter code: L-Ala-D/L-amino acid epimerase (347 aa).

156–158 is a binding site for substrate; the sequence is KLK. Mg(2+)-binding residues include D183, E211, and D237. Residues K259 and 309 to 311 each bind substrate; that span reads DID.

Belongs to the mandelate racemase/muconate lactonizing enzyme family. Mg(2+) is required as a cofactor.

In terms of biological role, dipeptide epimerase with a broad substrate specificity. Catalyzes the epimerization of L-Ala-L-Ala, L-Ala-L-Ser, L-Ala-L-Thr, L-Ala-L-Met, L-Ala-L-Phe, L-Ala-L-Tyr, L-Gly-L-Asp, L-Val-L-Asp, L-Val-L-Glu and L-Val-L-Phe (in vitro). Can also catalyze the epimerization of L-Ala-L-Glu, but with lower efficiency. The protein is L-Ala-D/L-amino acid epimerase of Pedosphaera parvula (strain Ellin514).